We begin with the raw amino-acid sequence, 300 residues long: Bifunctional protein FolD 2 (300 aa).

NADP(+) contacts are provided by residues 165–167 (GRS), Ser190, and Ile231.

Belongs to the tetrahydrofolate dehydrogenase/cyclohydrolase family. As to quaternary structure, homodimer.

The enzyme catalyses (6R)-5,10-methylene-5,6,7,8-tetrahydrofolate + NADP(+) = (6R)-5,10-methenyltetrahydrofolate + NADPH. The catalysed reaction is (6R)-5,10-methenyltetrahydrofolate + H2O = (6R)-10-formyltetrahydrofolate + H(+). It functions in the pathway one-carbon metabolism; tetrahydrofolate interconversion. Its function is as follows. Catalyzes the oxidation of 5,10-methylenetetrahydrofolate to 5,10-methenyltetrahydrofolate and then the hydrolysis of 5,10-methenyltetrahydrofolate to 10-formyltetrahydrofolate. The polypeptide is Bifunctional protein FolD 2 (Pseudomonas syringae pv. syringae (strain B728a)).